The chain runs to 352 residues: 4-hydroxy-2-oxovalerate aldolase (352 aa).

Positions 14–266 constitute a Pyruvate carboxyltransferase domain; that stretch reads VRMTDTSLRD…KTGIDFFDIA (253 aa). Substrate is bound at residue 22–23; it reads RD. Aspartate 23 is a binding site for Mn(2+). Histidine 26 serves as the catalytic Proton acceptor. Residues serine 176 and histidine 205 each coordinate substrate. Residues histidine 205 and histidine 207 each contribute to the Mn(2+) site. Residue tyrosine 296 participates in substrate binding.

The protein belongs to the 4-hydroxy-2-oxovalerate aldolase family.

The catalysed reaction is (S)-4-hydroxy-2-oxopentanoate = acetaldehyde + pyruvate. This is 4-hydroxy-2-oxovalerate aldolase from Mycolicibacterium gilvum (strain PYR-GCK) (Mycobacterium gilvum (strain PYR-GCK)).